The chain runs to 397 residues: Tryptophan synthase beta chain (397 aa).

Position 87 is an N6-(pyridoxal phosphate)lysine (Lys-87).

It belongs to the TrpB family. As to quaternary structure, tetramer of two alpha and two beta chains. Requires pyridoxal 5'-phosphate as cofactor.

The catalysed reaction is (1S,2R)-1-C-(indol-3-yl)glycerol 3-phosphate + L-serine = D-glyceraldehyde 3-phosphate + L-tryptophan + H2O. Its pathway is amino-acid biosynthesis; L-tryptophan biosynthesis; L-tryptophan from chorismate: step 5/5. Its function is as follows. The beta subunit is responsible for the synthesis of L-tryptophan from indole and L-serine. In Enterobacter sp. (strain 638), this protein is Tryptophan synthase beta chain.